Here is a 231-residue protein sequence, read N- to C-terminus: Orotidine 5'-phosphate decarboxylase (231 aa).

Substrate contacts are provided by residues aspartate 11, lysine 33, 60–69, threonine 120, arginine 181, glutamine 190, glycine 210, and arginine 211; that span reads DLKFHDIPNT. The Proton donor role is filled by lysine 62.

The protein belongs to the OMP decarboxylase family. Type 1 subfamily. In terms of assembly, homodimer.

It carries out the reaction orotidine 5'-phosphate + H(+) = UMP + CO2. It participates in pyrimidine metabolism; UMP biosynthesis via de novo pathway; UMP from orotate: step 2/2. Its function is as follows. Catalyzes the decarboxylation of orotidine 5'-monophosphate (OMP) to uridine 5'-monophosphate (UMP). This is Orotidine 5'-phosphate decarboxylase from Shewanella oneidensis (strain ATCC 700550 / JCM 31522 / CIP 106686 / LMG 19005 / NCIMB 14063 / MR-1).